A 95-amino-acid chain; its full sequence is MPDIAIEVVYALPEKQYLYNVKVPQGSSVEQAIIASGLLQLRPEIDLQENKVGIFSRPVKLHDEVNGGDRVEIYRPLIADPKDLRRQRAERAAKK.

The protein belongs to the UPF0125 (RnfH) family.

This Erwinia tasmaniensis (strain DSM 17950 / CFBP 7177 / CIP 109463 / NCPPB 4357 / Et1/99) protein is Protein RnfH.